We begin with the raw amino-acid sequence, 213 residues long: Na(+)-translocating NADH-quinone reductase subunit D (213 aa).

7 helical membrane-spanning segments follow: residues 21-41 (ILIA…VQTA), 42-62 (ITMG…VSLL), 77-97 (IIIS…FFDI), 101-121 (LSVF…SESL), 131-151 (FLDG…IGVI), 153-173 (ELFG…VYAS), and 183-203 (LSLM…IWLV).

Belongs to the NqrDE/RnfAE family. As to quaternary structure, composed of six subunits; NqrA, NqrB, NqrC, NqrD, NqrE and NqrF.

It is found in the cell inner membrane. It carries out the reaction a ubiquinone + n Na(+)(in) + NADH + H(+) = a ubiquinol + n Na(+)(out) + NAD(+). In terms of biological role, NQR complex catalyzes the reduction of ubiquinone-1 to ubiquinol by two successive reactions, coupled with the transport of Na(+) ions from the cytoplasm to the periplasm. NqrA to NqrE are probably involved in the second step, the conversion of ubisemiquinone to ubiquinol. The protein is Na(+)-translocating NADH-quinone reductase subunit D of Chlamydia pneumoniae (Chlamydophila pneumoniae).